We begin with the raw amino-acid sequence, 536 residues long: UDP-glucuronosyltransferase 2A2 (536 aa).

The Cytoplasmic portion of the chain corresponds to methionine 1–glutamine 15. The chain crosses the membrane as a helical span at residues methionine 16–proline 36. Over threonine 37–valine 500 the chain is Lumenal. Residues asparagine 58, asparagine 322, and asparagine 356 are each glycosylated (N-linked (GlcNAc...) asparagine). The chain crosses the membrane as a helical span at residues isoleucine 501–phenylalanine 521. The Cytoplasmic segment spans residues serine 522–glutamate 536.

The protein belongs to the UDP-glycosyltransferase family. Mainly expressed in the nasal mucosa.

It localises to the endoplasmic reticulum membrane. It carries out the reaction glucuronate acceptor + UDP-alpha-D-glucuronate = acceptor beta-D-glucuronoside + UDP + H(+). The enzyme catalyses 17alpha-estradiol + UDP-alpha-D-glucuronate = 17alpha-estradiol 3-O-(beta-D-glucuronate) + UDP + H(+). It catalyses the reaction 17beta-estradiol + UDP-alpha-D-glucuronate = 17beta-estradiol 3-O-(beta-D-glucuronate) + UDP + H(+). The catalysed reaction is chenodeoxycholate + UDP-alpha-D-glucuronate = chenodeoxycholoyl-24-O-(beta-D-glucuronate) + UDP. It carries out the reaction lithocholate + UDP-alpha-D-glucuronate = lithocholoyl-24-O-(beta-D-glucuronate) + UDP. The enzyme catalyses deoxycholate + UDP-alpha-D-glucuronate = deoxycholoyl-24-O-(beta-D-glucuronate) + UDP. It catalyses the reaction hyocholate + UDP-alpha-D-glucuronate = hyocholoyl-24-O-(beta-D-glucuronate) + UDP. The catalysed reaction is hyodeoxycholate + UDP-alpha-D-glucuronate = hyodeoxycholate 6-O-(beta-D-glucuronate) + UDP + H(+). Its function is as follows. UDP-glucuronosyltransferase (UGT) that catalyzes phase II biotransformation reactions in which lipophilic substrates are conjugated with glucuronic acid to increase the metabolite's water solubility, thereby facilitating excretion into either the urine or bile. Essential for the elimination and detoxification of drugs, xenobiotics and endogenous compounds. Catalyzes the glucuronidation of endogenous estrogen hormone estradiol. Contributes to bile acid (BA) detoxification by catalyzing the glucuronidation of BA substrates, which are natural detergents for dietary lipids absorption. Shows a potential role in detoxification of toxic waste compounds in the amniotic fluid before birth, and air-born chemical after birth. This Homo sapiens (Human) protein is UDP-glucuronosyltransferase 2A2.